Consider the following 300-residue polypeptide: Ribosomal protein L11 methyltransferase (300 aa).

S-adenosyl-L-methionine-binding residues include threonine 152, glycine 173, aspartate 195, and asparagine 234.

The protein belongs to the methyltransferase superfamily. PrmA family.

It localises to the cytoplasm. It catalyses the reaction L-lysyl-[protein] + 3 S-adenosyl-L-methionine = N(6),N(6),N(6)-trimethyl-L-lysyl-[protein] + 3 S-adenosyl-L-homocysteine + 3 H(+). In terms of biological role, methylates ribosomal protein L11. This is Ribosomal protein L11 methyltransferase from Burkholderia ambifaria (strain MC40-6).